The chain runs to 737 residues: Amino-acid acetyltransferase, mitochondrial (737 aa).

A mitochondrion-targeting transit peptide spans Met1–Ala47. The tract at residues Ser43–Arg78 is disordered. One can recognise an N-acetyltransferase domain in the interval Gly558–Pro727.

This sequence belongs to the acetyltransferase family.

The protein localises to the mitochondrion. The catalysed reaction is L-glutamate + acetyl-CoA = N-acetyl-L-glutamate + CoA + H(+). The protein operates within amino-acid biosynthesis; L-arginine biosynthesis; N(2)-acetyl-L-ornithine from L-glutamate: step 1/4. Its function is as follows. N-acetylglutamate synthase involved in arginine biosynthesis. In Coccidioides immitis (strain RS) (Valley fever fungus), this protein is Amino-acid acetyltransferase, mitochondrial (ARG2).